The sequence spans 252 residues: Mitochondrial intermembrane space import and assembly protein 40 (252 aa).

The N-terminal 31 residues, 1-31, are a transit peptide targeting the mitochondrion; that stretch reads MYRTISRSSSGLIRQSTARLTRQLSTTRTTP. Topologically, residues 32 to 37 are mitochondrial matrix; sequence SQYNSK. A helical; Signal-anchor for type II membrane protein membrane pass occupies residues 38 to 54; sequence LLLGVLGTGALAFGYFS. Topologically, residues 55-252 are mitochondrial intermembrane; that stretch reads QQSSLIQNAS…DKVKPNTKSD (198 aa). Residues 90–123 are compositionally biased toward basic and acidic residues; sequence RQEKVIKENEQKTKKAEDAKTSSESKANVADKKS. Positions 90 to 143 are disordered; it reads RQEKVIKENEQKTKKAEDAKTSSESKANVADKKSNSQPEGEPEGEGKQEAAFNP. Disulfide bonds link Cys-152/Cys-154, Cys-163/Cys-196, and Cys-173/Cys-186. A CHCH domain is found at 160-204; the sequence is HGPCGEEFKEAFSCFVFSETEPKGIDCIKKFENMRSCFKRYPEHY. 2 short sequence motifs (cx9C motif) span residues 163 to 173 and 186 to 196; these read CGEEFKEAFSC and CIKKFENMRSC. A disordered region spans residues 230–252; sequence EPAIEQIEQGIKEDKVKPNTKSD. Residues 239 to 252 are compositionally biased toward basic and acidic residues; that stretch reads GIKEDKVKPNTKSD.

In terms of assembly, monomer. The cofactor is Cu(2+). Requires Zn(2+) as cofactor.

The protein resides in the mitochondrion inner membrane. Required for the import and folding of small cysteine-containing proteins (small Tim) in the mitochondrial intermembrane space (IMS). Forms a redox cycle with ERV1 that involves a disulfide relay system. Precursor proteins to be imported into the IMS are translocated in their reduced form into the mitochondria. The oxidized form of MIA40 forms a transient intermolecular disulfide bridge with the reduced precursor protein, resulting in oxidation of the precursor protein that now contains an intramolecular disulfide bond and is able to undergo folding in the IMS. The protein is Mitochondrial intermembrane space import and assembly protein 40 (MIA40) of Candida albicans (strain SC5314 / ATCC MYA-2876) (Yeast).